A 372-amino-acid chain; its full sequence is tRNA-specific 2-thiouridylase MnmA (372 aa).

ATP is bound by residues 13–20 and Met-39; that span reads GMSGGVDS. An interaction with target base in tRNA region spans residues 99–101; it reads NPD. Cys-104 functions as the Nucleophile in the catalytic mechanism. Cysteines 104 and 200 form a disulfide. Position 128 (Gly-128) interacts with ATP. The segment at 150 to 152 is interaction with tRNA; the sequence is KDQ. Cys-200 functions as the Cysteine persulfide intermediate in the catalytic mechanism. Residues 310 to 311 form an interaction with tRNA region; the sequence is RY.

Belongs to the MnmA/TRMU family.

It localises to the cytoplasm. It catalyses the reaction S-sulfanyl-L-cysteinyl-[protein] + uridine(34) in tRNA + AH2 + ATP = 2-thiouridine(34) in tRNA + L-cysteinyl-[protein] + A + AMP + diphosphate + H(+). Functionally, catalyzes the 2-thiolation of uridine at the wobble position (U34) of tRNA, leading to the formation of s(2)U34. The sequence is that of tRNA-specific 2-thiouridylase MnmA from Bacillus licheniformis (strain ATCC 14580 / DSM 13 / JCM 2505 / CCUG 7422 / NBRC 12200 / NCIMB 9375 / NCTC 10341 / NRRL NRS-1264 / Gibson 46).